The sequence spans 133 residues: Hexon-interlacing protein (133 aa).

The stretch at 97 to 127 (REEDALSVVLTRMEELSQQLQDLFAKVALLN) forms a coiled coil.

The protein belongs to the adenoviridae hexon-interlacing protein family. As to quaternary structure, homotrimer. Interacts with hexon protein; this interaction tethers the hexons together. Self-interacts with adjacent proteins. Interacts with kinesin light chain KLC1; this interaction leads to capsid disruption at the nuclear pore complex during virus entry into host cell.

It is found in the virion. The protein localises to the host nucleus. In terms of biological role, structural component of the virion that acts as a cement protein on the capsid exterior and forms triskelion structures consisting of three molecules that stabilize three hexon trimers at the center of each icosahedral facet and fixes the peripentonal hexons. Dispensable for assembly. During virus entry, recruits the anterograde motor kinesin-1 to the capsid docked at the nuclear pore complex thereby subjecting the docked capsid to a pulling force. The resulting tension leads to capsid disruption, dispersion of capsid fragments toward cell periphery and eventually viral DNA entry into the host nucleus. In Homo sapiens (Human), this protein is Hexon-interlacing protein.